Here is a 307-residue protein sequence, read N- to C-terminus: Taste receptor type 2 member 10 (307 aa).

Topologically, residues 1-6 (MLRVVE) are extracellular. A helical transmembrane segment spans residues 7–27 (GIFIFVVVSESVFGVLGNGFI). The Cytoplasmic portion of the chain corresponds to 28 to 42 (GLVNCIDCAKNKLST). Residues 43–63 (IGFILTGLAISRIFLIWIIIT) form a helical membrane-spanning segment. Over 64-100 (DGFIQIFSPNIYASGNLIEYISYFWVIGNQSSMWFAT) the chain is Extracellular. Asn92 is a glycosylation site (N-linked (GlcNAc...) asparagine). A helical membrane pass occupies residues 101–121 (SLSIFYFLKIANFSNYIFLWL). The Cytoplasmic segment spans residues 122-126 (KSRTN). A helical membrane pass occupies residues 127 to 147 (MVLPFMIVFLLISSLLNFAYI). The Extracellular portion of the chain corresponds to 148 to 179 (AKILNDYKTKNDTVWDLNMYKSEYFIKQILLN). N-linked (GlcNAc...) asparagine glycosylation occurs at Asn158. A helical transmembrane segment spans residues 180-200 (LGVIFFFTLSLITCIFLIISL). The Cytoplasmic portion of the chain corresponds to 201–227 (WRHNRQMQSNVTGLRDSNTEAHVKAMK). A helical transmembrane segment spans residues 228-248 (VLISFIILFILYFIGMAIEIS). Residues 249 to 257 (CFTVRENKL) are Extracellular-facing. The helical transmembrane segment at 258-278 (LLMFGMTTTAIYPWGHSFILI) threads the bilayer. The Cytoplasmic segment spans residues 279–307 (LGNSKLKQASLRVLQQLKCCEKRKNLRVT).

The protein belongs to the G-protein coupled receptor T2R family. As to expression, expressed in subsets of taste receptor cells of the tongue and palate epithelium and exclusively in gustducin-positive cells.

Its subcellular location is the membrane. Its function is as follows. Gustducin-coupled strychnine receptor implicated in the perception of bitter compounds in the oral cavity and the gastrointestinal tract. Signals through PLCB2 and the calcium-regulated cation channel TRPM5. The sequence is that of Taste receptor type 2 member 10 (TAS2R10) from Homo sapiens (Human).